Reading from the N-terminus, the 326-residue chain is Nicotianamine synthase 2 (326 aa).

Belongs to the nicotianamine synthase (NAS)-like family. Expressed in roots.

It carries out the reaction 3 S-adenosyl-L-methionine = nicotianamine + 3 S-methyl-5'-thioadenosine + 3 H(+). Synthesizes nicotianamine, a polyamine that is the first intermediate in the synthesis of the phytosiderophores of the mugineic acid type found in gramineae which serve as a sensor for the physiological iron status within the plant, and/or might be involved in the transport of iron. The sequence is that of Nicotianamine synthase 2 (NAS2) from Oryza sativa subsp. japonica (Rice).